The following is a 207-amino-acid chain: Vexin (207 aa).

The tract at residues 65 to 104 (RDTGDRRWLQTGRLQTARPPGAHPTKTPSRPVGISEPKTS) is disordered.

This sequence belongs to the vexin family.

It localises to the cell membrane. Its subcellular location is the nucleus. In terms of biological role, required for neurogenesis in the neural plate and retina. Strongly cooperates with neural bHLH factors to promote neurogenesis. The chain is Vexin from Mus musculus (Mouse).